The sequence spans 524 residues: Tyrosine-protein kinase HCK (524 aa).

2 disordered regions span residues 1–20 (MGGR…GRVP) and 35–71 (KASK…LPPG). The N-myristoyl glycine moiety is linked to residue Gly2. Gly3 carries S-palmitoyl cysteine lipidation. Tyr50 carries the post-translational modification Phosphotyrosine; by autocatalysis. Positions 76–136 (SEDTIVVALY…PSNYVARVNS (61 aa)) constitute an SH3 domain. In terms of domain architecture, SH2 spans 142-239 (WFFKGISRKD…GLCQKLSVPC (98 aa)). Thr200 is subject to Phosphothreonine. Tyr207 bears the Phosphotyrosine mark. One can recognise a Protein kinase domain in the interval 260 to 513 (LQMEKKLGAG…YIQSVLDDFY (254 aa)). Residues 266–274 (LGAGQFGEV) and Lys288 each bind ATP. The active-site Proton acceptor is Asp379. Tyr409 bears the Phosphotyrosine; by autocatalysis mark. The residue at position 460 (Ser460) is a Phosphoserine. Tyr520 carries the phosphotyrosine modification.

Belongs to the protein kinase superfamily. Tyr protein kinase family. SRC subfamily. As to quaternary structure, interacts with ADAM15. Interacts with FASLG. Interacts with ARRB1 and ARRB2. Interacts with FCGR1A; the interaction may be indirect. Interacts with IL6ST. Interacts (via SH3 domain) with ELMO1. Interacts (via SH3 domain) with TP73. Interacts with YAP1. Interacts with ABL1 and ITGB1, and thereby recruits ABL1 to activated ITGB1. Interacts (via SH2 domain) with FLT3 (tyrosine phosphorylated). Interacts with CBL. Interacts with VAV1, WAS and RAPGEF1. Interacts (via SH3 domain) with WDCP. Post-translationally, phosphorylated on several tyrosine residues. Autophosphorylated. Becomes rapidly phosphorylated upon activation of the immunoglobulin receptors FCGR1A and FCGR2A. Phosphorylation at Tyr-409 increases kinase activity. Phosphorylation at Tyr-520 inhibits kinase activity. Kinase activity is not required for phosphorylation at Tyr-520, suggesting that this site may be a target of other kinases. Ubiquitinated by CBL, leading to its degradation via the proteasome. In terms of processing, isoform 2 palmitoylation at position 2 requires prior myristoylation. Palmitoylation at position 3 is required for caveolar localization of isoform 2. As to expression, expressed strongly in spleen and at very low levels in thymus.

Its subcellular location is the cytoplasmic vesicle. The protein localises to the secretory vesicle. It localises to the cytoplasm. The protein resides in the cytosol. It is found in the membrane. Its subcellular location is the caveola. The protein localises to the lysosome. It localises to the cell projection. The protein resides in the podosome membrane. It is found in the cell membrane. Its subcellular location is the cell junction. The protein localises to the focal adhesion. It localises to the cytoskeleton. The protein resides in the golgi apparatus. It is found in the nucleus. It carries out the reaction L-tyrosyl-[protein] + ATP = O-phospho-L-tyrosyl-[protein] + ADP + H(+). With respect to regulation, subject to autoinhibition, mediated by intramolecular interactions involving the SH2 and SH3 domains. Kinase activity is also regulated by phosphorylation at regulatory tyrosine residues. Phosphorylation at Tyr-409 is required for optimal activity. Phosphorylation at Tyr-520 inhibits kinase activity. In terms of biological role, non-receptor tyrosine-protein kinase found in hematopoietic cells that transmits signals from cell surface receptors and plays an important role in the regulation of innate immune responses, including neutrophil, monocyte, macrophage and mast cell functions, phagocytosis, cell survival and proliferation, cell adhesion and migration. Acts downstream of receptors that bind the Fc region of immunoglobulins, such as FCGR1A and FCGR2A, but also CSF3R, PLAUR, the receptors for IFNG, IL2, IL6 and IL8, and integrins, such as ITGB1 and ITGB2. During the phagocytic process, mediates mobilization of secretory lysosomes, degranulation, and activation of NADPH oxidase to bring about the respiratory burst. Plays a role in the release of inflammatory molecules. Promotes reorganization of the actin cytoskeleton and actin polymerization, formation of podosomes and cell protrusions. Inhibits TP73-mediated transcription activation and TP73-mediated apoptosis. Phosphorylates CBL in response to activation of immunoglobulin gamma Fc region receptors. Phosphorylates ADAM15, BCR, ELMO1, FCGR2A, GAB1, GAB2, RAPGEF1, STAT5B, TP73, VAV1 and WAS. The sequence is that of Tyrosine-protein kinase HCK (Hck) from Rattus norvegicus (Rat).